The primary structure comprises 277 residues: Phosphatidylglycerol--prolipoprotein diacylglyceryl transferase (277 aa).

Transmembrane regions (helical) follow at residues 18–38 (ISVKWYGVIIASAVVIALLLA), 51–71 (IIVDLLIWAIPISIISARIYY), 89–109 (IWHGGIAIYGALIGAVLTAII), and 116–136 (ISFWQLADVVAPSLIIAQAIG). Arg137 is an a 1,2-diacyl-sn-glycero-3-phospho-(1'-sn-glycerol) binding site. The next 3 helical transmembrane spans lie at 177–197 (QPTFLYESLWNVLGFIILLII), 205–225 (GELFLGYVIWYSFGRFFIEGM), and 235–255 (FRVSQVLSLLLIVLSIGIIIY).

It belongs to the Lgt family.

The protein resides in the cell membrane. The enzyme catalyses L-cysteinyl-[prolipoprotein] + a 1,2-diacyl-sn-glycero-3-phospho-(1'-sn-glycerol) = an S-1,2-diacyl-sn-glyceryl-L-cysteinyl-[prolipoprotein] + sn-glycerol 1-phosphate + H(+). It participates in protein modification; lipoprotein biosynthesis (diacylglyceryl transfer). Its function is as follows. Catalyzes the transfer of the diacylglyceryl group from phosphatidylglycerol to the sulfhydryl group of the N-terminal cysteine of a prolipoprotein, the first step in the formation of mature lipoproteins. The protein is Phosphatidylglycerol--prolipoprotein diacylglyceryl transferase of Listeria monocytogenes serotype 4a (strain HCC23).